The following is a 192-amino-acid chain: Transmembrane protein 11, mitochondrial (192 aa).

The segment at 1–20 (MAAWGRRRLGPGSSGGSARE) is disordered. Helical transmembrane passes span 84–100 (TAVL…LALP) and 107–124 (ISLP…LYGI).

The protein belongs to the TMEM11 family. As to quaternary structure, associates with the mitochondrial contact site and cristae organizing system (MICOS) complex, composed of at least MICOS10/MIC10, CHCHD3/MIC19, CHCHD6/MIC25, APOOL/MIC27, IMMT/MIC60, APOO/MIC23/MIC26 and QIL1/MIC13. This complex was also known under the names MINOS or MitOS complex. The MICOS complex associates with mitochondrial outer membrane proteins SAMM50, MTX1, MTX2 and DNAJC11, mitochondrial inner membrane protein TMEM11 and with HSPA9. Interacts with IMMT/MIC60.

It localises to the mitochondrion inner membrane. Functionally, plays a role in mitochondrial morphogenesis. The polypeptide is Transmembrane protein 11, mitochondrial (TMEM11) (Homo sapiens (Human)).